Consider the following 288-residue polypeptide: Peroxisomal protein PEX21 (288 aa).

Residue Cys-5 forms a Glycyl cysteine thioester (Cys-Gly) (interchain with G-Cter in ubiquitin) linkage.

Belongs to the peroxin-21 family. In terms of assembly, interacts with PEX7. Interacts with PEX13. Interacts with SES1. Post-translationally, monoubiquitinated at Cys-5; acts as a signal for PEX21 extraction and is required for proper export from peroxisomes and recycling.

It is found in the cytoplasm. The protein localises to the cytosol. Its subcellular location is the peroxisome. In terms of biological role, receptor that mediates peroxisomal import of proteins containing a C-terminal PTS2-type peroxisomal targeting signal via its interaction with PEX7. Interaction with PEX7 only takes place when PEX7 is associated with cargo proteins containing a PTS2 peroxisomal targeting signal. PEX7 along with PTS2-containing cargo proteins are then translocated through the PEX13-PEX14 docking complex together with PEX21. Acts as an activator of the seryl-tRNA synthetase SES1 by increasing its binding to tRNA. The chain is Peroxisomal protein PEX21 (PEX21) from Saccharomyces cerevisiae (strain ATCC 204508 / S288c) (Baker's yeast).